The chain runs to 66 residues: Beta-toxin Cbo3 (66 aa).

The 66-residue stretch at 1–66 (KEGYIVNYHD…VWPLPKKTCN (66 aa)) folds into the LCN-type CS-alpha/beta domain. 4 cysteine pairs are disulfide-bonded: Cys-12–Cys-65, Cys-16–Cys-41, Cys-25–Cys-46, and Cys-29–Cys-48. The residue at position 66 (Asn-66) is an Asparagine amide.

Belongs to the long (4 C-C) scorpion toxin superfamily. Sodium channel inhibitor family. Beta subfamily. In terms of tissue distribution, expressed by the venom gland.

The protein localises to the secreted. Its function is as follows. Beta toxins bind voltage-independently at site-4 of sodium channels and shift the voltage of activation toward more negative potentials thereby affecting sodium channel activation and promoting spontaneous and repetitive firing. A mixture of Cbo2 and Cbo3 is weakly active on the human voltage-gated sodium channels Nav1.4/SCN4A and Nav1.6/SCN8A when tested at 200 nM. In vivo, is toxic to mice when intraperitoneally injected. This is Beta-toxin Cbo3 from Centruroides bonito (Scorpion).